A 388-amino-acid chain; its full sequence is Trans-enoyl reductase tenC (388 aa).

51-54 (VDGK) serves as a coordination point for NADP(+). 142–149 (VGIASVGM) is a substrate binding site. NADP(+) is bound by residues 219 to 222 (SSES), tyrosine 237, and 284 to 285 (LD). Position 304–308 (304–308 (SFTQF)) interacts with substrate. 373–374 (IK) contacts NADP(+).

This sequence belongs to the zinc-containing alcohol dehydrogenase family. Monomer.

It participates in secondary metabolite biosynthesis. Its function is as follows. Trans-enoyl reductase; part of the gene cluster that mediates the biosynthesis of tenellin-type 2-pyridones, iron-chelating compounds involved in iron stress tolerance, competition with the natural competitor fungus Metarhizium robertsii and insect hosts infection. TenC collaborates with the hybrid PKS-NRPS synthetase tenS to catalyze the assembly of the polyketide-amino acid backbone, since tenS lacks a designated enoylreductase (ER) domain. Upon formation of the polyketide backbone on the thiotemplate of tenS, the triketide is transferred to the NRPS module and linked to tyrosine to produce the pyrrolidine-2-dione intermediates, including pretellinin A, 11-hydropretellenin A, 12-hydropretellenin A, 13-hydropretellenin A, 14-hydropretellenin A, 12-oxopretellenin A and prototellinin D. The pathway begins with the assembly of the polyketide-amino acid backbone by the hybrid PKS-NRPS tenS with the help of the enoyl reductase tenC. These enzymes catalyze the synthesis of the pyrrolidine-2-dione intermediates pretellinin A, 11-hydropretellenin A, 12-hydropretellenin A, 13-hydropretellenin A, 14-hydropretellenin A, 12-oxopretellenin A and prototellinin D. The cytochrome P450 monooxygenase tenA then catalyzes an oxidative ring expansion of pretenellin A and 14-hydropretellenin A to form the 2-pyridone core, leading to pretenellin B and pyridovericin, respectively. The cytochrome P450 monooxygenase tenB is then required for the selective N-hydroxylation of the 2-pyridone nitrogen of yield tellinin and 15-hydroxytellenin (15-HT), respectively. The UDP-glucosyltransferase GT1 and the methyltransferase MT1, located outside the tenS gene cluster, contribute to the stepwise glycosylation and methylation of 15-HT to obtain the glycoside pyridovericin-N-O-(4-O-methyl-beta-D-glucopyranoside) (PMGP). Additional related compounds such as 1-O-methyl-15-HT, (8Z)-1-O-methyl-15-HT, and O-methyltenellin A are also produced but the enzymes involved in their biosynthesis have still to be determined. The polypeptide is Trans-enoyl reductase tenC (Beauveria bassiana (strain ARSEF 2860) (White muscardine disease fungus)).